A 626-amino-acid polypeptide reads, in one-letter code: Carnitine O-acetyltransferase (626 aa).

Lys-93 is subject to N6-succinyllysine. Lys-261 is modified (N6-acetyllysine; alternate). Position 261 is an N6-succinyllysine; alternate (Lys-261). Lys-268 bears the N6-acetyllysine mark. The active-site Proton acceptor is the His-343. CoA-binding positions include Lys-419 and 423–430 (KSEKLSPD). Residues Tyr-452 and Ser-454 each contribute to the (R)-carnitine site. Residue Ser-456 coordinates CoA. Thr-465 is a (R)-carnitine binding site. CoA contacts are provided by Arg-504 and Gln-555. The Microbody targeting signal signature appears at 624 to 626 (AKL).

This sequence belongs to the carnitine/choline acetyltransferase family. As to quaternary structure, monomer. As to expression, mostly in skeletal muscle, less in heart, liver and pancreas, only weakly detectable in brain, placenta, lung and kidney.

Its subcellular location is the endoplasmic reticulum. It is found in the peroxisome. The protein resides in the mitochondrion inner membrane. It localises to the mitochondrion. It catalyses the reaction (R)-carnitine + acetyl-CoA = O-acetyl-(R)-carnitine + CoA. It carries out the reaction propanoyl-CoA + (R)-carnitine = O-propanoyl-(R)-carnitine + CoA. The catalysed reaction is butanoyl-CoA + (R)-carnitine = O-butanoyl-(R)-carnitine + CoA. The enzyme catalyses hexanoyl-CoA + (R)-carnitine = O-hexanoyl-(R)-carnitine + CoA. It catalyses the reaction octanoyl-CoA + (R)-carnitine = O-octanoyl-(R)-carnitine + CoA. It carries out the reaction decanoyl-CoA + (R)-carnitine = O-decanoyl-(R)-carnitine + CoA. The catalysed reaction is 3-methylbutanoyl-CoA + (R)-carnitine = O-3-methylbutanoyl-(R)-carnitine + CoA. The enzyme catalyses 2-methylpropanoyl-CoA + (R)-carnitine = O-isobutanoyl-(R)-carnitine + CoA. It catalyses the reaction 2-methylbutanoyl-CoA + (R)-carnitine = O-2-methylbutanoyl-(R)-carnitine + CoA. It carries out the reaction acetoacetyl-CoA + (R)-carnitine = O-3-oxobutanoyl-(R)-carnitine + CoA. The catalysed reaction is 3-hydroxybutanoyl-CoA + (R)-carnitine = O-3-hydroxybutanoyl-(R)-carnitine + CoA. The enzyme catalyses 4,8-dimethylnonanoyl-CoA + (R)-carnitine = O-4,8-dimethylnonanoyl-(R)-carnitine + CoA. It catalyses the reaction 2,6-dimethylheptanoyl-CoA + (R)-carnitine = O-2,6-dimethylheptanoyl-(R)-carnitine + CoA. Its function is as follows. Catalyzes the reversible transfer of acyl groups from carnitine to coenzyme A (CoA) and regulates the acyl-CoA/CoA ratio. Also plays a crucial role in the transport of fatty acids for beta-oxidation. Responsible for the synthesis of short- and branched-chain acylcarnitines. Active towards some branched-chain amino acid oxidation pathway (BCAAO) intermediates. Trans-2-enoyl-CoAs and 2-methylacyl-CoAs are poor substrates. The protein is Carnitine O-acetyltransferase of Homo sapiens (Human).